Consider the following 370-residue polypeptide: Coproporphyrin III ferrochelatase (370 aa).

Residues Ser-58 and Tyr-127 each coordinate Fe-coproporphyrin III. Residues His-189 and Glu-276 each contribute to the Fe(2+) site.

This sequence belongs to the ferrochelatase family.

It localises to the cytoplasm. It catalyses the reaction Fe-coproporphyrin III + 2 H(+) = coproporphyrin III + Fe(2+). It participates in porphyrin-containing compound metabolism; protoheme biosynthesis. Involved in coproporphyrin-dependent heme b biosynthesis. Catalyzes the insertion of ferrous iron into coproporphyrin III to form Fe-coproporphyrin III. This Corynebacterium glutamicum (strain R) protein is Coproporphyrin III ferrochelatase.